The sequence spans 253 residues: Neurotrophin-3 (253 aa).

The N-terminal stretch at 1–18 (MSILFYVMFLAYLRGVQG) is a signal peptide. A propeptide spanning residues 19 to 134 (NSMDQRSLPE…AANRTSRRKR (116 aa)) is cleaved from the precursor. Residues 62–89 (TLPKAEAPPREPAKSEFQPVTAMGPELL) are disordered. Residue Asn127 is glycosylated (N-linked (GlcNAc...) asparagine). Disulfide bonds link Cys148–Cys213, Cys191–Cys242, and Cys201–Cys244.

This sequence belongs to the NGF-beta family.

The protein localises to the secreted. Seems to promote the survival of visceral and proprioceptive sensory neurons. This is Neurotrophin-3 (NTF3) from Bos taurus (Bovine).